Consider the following 459-residue polypeptide: VGFKAGVKDYKLTYYTPDYETKDTDILAAFRVTPQPGVPPEEAGAVVAAESSTGTWTTVWTDGLTNLDRYKGRCYHIEPVAGEENQFIAYVAYPLDLFEEGSVTNMFTSIVGNVFGFKALRALRLEDLRIPVAYVKTFQGPPHGIQVERDKLNKYGRPLLGCTIKPKLGLSAKNYGRAVYECLRGGLDFTKDDENVNSQPFMRWRDRFLFCAEALYKAQAETGEIKGHYLNATAGTCEEMIKRAVFARELGVPIVMHDYLTGGFTANTSLAHYCRDNGLLLHIHRAMHAVIDRQKNHGIHFRVLAKALRMSGGDHIHSGTVVGKLEGEREITLGFVDLLRDDFIEKDRSRGIYFTQDWVSLPGVLPVASGGIHVWHMPALTEIFGDDSVLQFGGGTLGHPWGNAPGAVANRVALEACVQARNEGRDLAREGNEIIREACKWSPELAAACEVWKEIKFEF.

The residue at position 4 (K4) is an N6,N6,N6-trimethyllysine. Substrate is bound by residues N113 and T163. K165 functions as the Proton acceptor in the catalytic mechanism. K167 provides a ligand contact to substrate. Mg(2+) is bound by residues K191, D193, and E194. K191 is modified (N6-carboxylysine). The active-site Proton acceptor is H284. The substrate site is built by R285, H317, and S369.

The protein belongs to the RuBisCO large chain family. Type I subfamily. Heterohexadecamer of 8 large chains and 8 small chains; disulfide-linked. The disulfide link is formed within the large subunit homodimers. The cofactor is Mg(2+). Post-translationally, the disulfide bond which can form in the large chain dimeric partners within the hexadecamer appears to be associated with oxidative stress and protein turnover.

The protein resides in the plastid. The protein localises to the chloroplast. The catalysed reaction is 2 (2R)-3-phosphoglycerate + 2 H(+) = D-ribulose 1,5-bisphosphate + CO2 + H2O. It catalyses the reaction D-ribulose 1,5-bisphosphate + O2 = 2-phosphoglycolate + (2R)-3-phosphoglycerate + 2 H(+). In terms of biological role, ruBisCO catalyzes two reactions: the carboxylation of D-ribulose 1,5-bisphosphate, the primary event in carbon dioxide fixation, as well as the oxidative fragmentation of the pentose substrate in the photorespiration process. Both reactions occur simultaneously and in competition at the same active site. The chain is Ribulose bisphosphate carboxylase large chain from Micranthes integrifolia (Wholeleaf saxifrage).